A 283-amino-acid chain; its full sequence is Formamidopyrimidine-DNA glycosylase (283 aa).

Pro-2 functions as the Schiff-base intermediate with DNA in the catalytic mechanism. Glu-3 acts as the Proton donor in catalysis. Lys-60 (proton donor; for beta-elimination activity) is an active-site residue. DNA contacts are provided by His-100, Arg-119, and Arg-164. The FPG-type zinc finger occupies Trp-249–Val-283. Arg-273 functions as the Proton donor; for delta-elimination activity in the catalytic mechanism.

This sequence belongs to the FPG family. As to quaternary structure, monomer. The cofactor is Zn(2+).

The enzyme catalyses Hydrolysis of DNA containing ring-opened 7-methylguanine residues, releasing 2,6-diamino-4-hydroxy-5-(N-methyl)formamidopyrimidine.. The catalysed reaction is 2'-deoxyribonucleotide-(2'-deoxyribose 5'-phosphate)-2'-deoxyribonucleotide-DNA = a 3'-end 2'-deoxyribonucleotide-(2,3-dehydro-2,3-deoxyribose 5'-phosphate)-DNA + a 5'-end 5'-phospho-2'-deoxyribonucleoside-DNA + H(+). Functionally, involved in base excision repair of DNA damaged by oxidation or by mutagenic agents. Acts as a DNA glycosylase that recognizes and removes damaged bases. Has a preference for oxidized purines, such as 7,8-dihydro-8-oxoguanine (8-oxoG). Has AP (apurinic/apyrimidinic) lyase activity and introduces nicks in the DNA strand. Cleaves the DNA backbone by beta-delta elimination to generate a single-strand break at the site of the removed base with both 3'- and 5'-phosphates. The polypeptide is Formamidopyrimidine-DNA glycosylase (Nostoc sp. (strain PCC 7120 / SAG 25.82 / UTEX 2576)).